A 127-amino-acid polypeptide reads, in one-letter code: Major sperm protein 77/79 (127 aa).

The residue at position 2 (Ala-2) is an N-acetylalanine. The 118-residue stretch at 9–126 (DIQTQPGTKI…RRKNLPIEYN (118 aa)) folds into the MSP domain.

Sperm.

The protein localises to the cell projection. The protein resides in the pseudopodium. It is found in the cytoplasm. It localises to the cytoskeleton. Central component in molecular interactions underlying sperm crawling. Forms an extensive filament system that extends from sperm villipoda, along the leading edge of the pseudopod. The polypeptide is Major sperm protein 77/79 (msp-77) (Caenorhabditis elegans).